We begin with the raw amino-acid sequence, 417 residues long: NADH-quinone oxidoreductase subunit D (417 aa).

Belongs to the complex I 49 kDa subunit family. NDH-1 is composed of 14 different subunits. Subunits NuoB, C, D, E, F, and G constitute the peripheral sector of the complex.

Its subcellular location is the cell inner membrane. It carries out the reaction a quinone + NADH + 5 H(+)(in) = a quinol + NAD(+) + 4 H(+)(out). NDH-1 shuttles electrons from NADH, via FMN and iron-sulfur (Fe-S) centers, to quinones in the respiratory chain. The immediate electron acceptor for the enzyme in this species is believed to be ubiquinone. Couples the redox reaction to proton translocation (for every two electrons transferred, four hydrogen ions are translocated across the cytoplasmic membrane), and thus conserves the redox energy in a proton gradient. This is NADH-quinone oxidoreductase subunit D from Francisella tularensis subsp. novicida (strain U112).